Consider the following 197-residue polypeptide: Protein-S-isoprenylcysteine O-methyltransferase A (197 aa).

The next 3 membrane-spanning stretches (helical) occupy residues 16–36 (MLLSLIFFHISEYILAITIHG), 52–72 (ALAMLLSLLEYLTEIILFPGL), and 81–101 (FGLIMIIVGEIIRKAAIITAG). Residues 116–119 (HGLV), Y124, and 129–132 (HPSY) each bind S-adenosyl-L-methionine. The helical transmembrane segment at 140–160 (VGTQVMLCNPVSAVAFAVVVW) threads the bilayer. R166 serves as a coordination point for substrate. S-adenosyl-L-methionine is bound at residue E170.

It belongs to the class VI-like SAM-binding methyltransferase superfamily. Isoprenylcysteine carboxyl methyltransferase family. It depends on Zn(2+) as a cofactor. As to expression, expressed primarily in flowers, stems, leaves and roots. Almost not expressed in siliques. Detected in root tips and vascular tissues of roots, cotyledons, petiols, hypocotyls, filaments, pollen grains and the distal and proximal portions of the gynoecium.

It localises to the endoplasmic reticulum membrane. It carries out the reaction [protein]-C-terminal S-[(2E,6E)-farnesyl]-L-cysteine + S-adenosyl-L-methionine = [protein]-C-terminal S-[(2E,6E)-farnesyl]-L-cysteine methyl ester + S-adenosyl-L-homocysteine. Its activity is regulated as follows. Inhibited by farnesylthioacetic acid (FTAA) and N-acetyl-S-trans, trans-farnesyl-l-cysteine (AFC). Its function is as follows. Catalyzes the post-translational methylation of isoprenylated C-terminal cysteine residues, resulting in the modulation of the function of prenylated proteins. Involved in negative regulation of abscisic acid signaling. Carboxyl methylation is a reversible and potentially regulated step in the post-translational modification of prenylated proteins. The protein is Protein-S-isoprenylcysteine O-methyltransferase A of Arabidopsis thaliana (Mouse-ear cress).